Here is a 140-residue protein sequence, read N- to C-terminus: Lymphocyte antigen 6H (140 aa).

A signal peptide spans 1 to 25; that stretch reads MLPAAMKGLGLALLAVLLCSAPAHG. The region spanning 26-91 is the UPAR/Ly6 domain; that stretch reads LWCQDCTLTT…RHFFSDYLMG (66 aa). 5 disulfides stabilise this stretch: C28-C52, C31-C40, C45-C73, C77-C104, and C105-C110. N36 carries N-linked (GlcNAc...) asparagine glycosylation. G115 carries the GPI-anchor amidated glycine lipid modification. The propeptide at 116–140 is removed in mature form; it reads AGHSPWALAGGLLLSLGPALLWAGP.

Interacts with CHRNA4 and CHRNA7. As to expression, highly expressed in brain (cerebral cortex, amygdala, hippocampus and subthalamic nucleus) and in acute human leukemic cell line MOLT-3. Also found in lower levels in testis, pancreas, small intestine and colon.

The protein localises to the cell membrane. Functionally, believed to act as a modulator of nicotinic acetylcholine receptors (nAChRs) activity. In vitro inhibits alpha-3:beta-4-containing nAChRs maximum response. May play a role in the intracellular trafficking of alpha-7-containing nAChRs and may inhibit their expression at the cell surface. Seems to inhibit alpha-7/CHRNA7 signaling in hippocampal neurons. The sequence is that of Lymphocyte antigen 6H (LY6H) from Homo sapiens (Human).